We begin with the raw amino-acid sequence, 157 residues long: Ribosome maturation factor RimP (157 aa).

This sequence belongs to the RimP family.

The protein localises to the cytoplasm. Functionally, required for maturation of 30S ribosomal subunits. This Bacillus licheniformis (strain ATCC 14580 / DSM 13 / JCM 2505 / CCUG 7422 / NBRC 12200 / NCIMB 9375 / NCTC 10341 / NRRL NRS-1264 / Gibson 46) protein is Ribosome maturation factor RimP.